Consider the following 181-residue polypeptide: ATP synthase subunit delta (181 aa).

It belongs to the ATPase delta chain family. As to quaternary structure, F-type ATPases have 2 components, F(1) - the catalytic core - and F(0) - the membrane proton channel. F(1) has five subunits: alpha(3), beta(3), gamma(1), delta(1), epsilon(1). F(0) has three main subunits: a(1), b(2) and c(10-14). The alpha and beta chains form an alternating ring which encloses part of the gamma chain. F(1) is attached to F(0) by a central stalk formed by the gamma and epsilon chains, while a peripheral stalk is formed by the delta and b chains.

The protein localises to the cell inner membrane. F(1)F(0) ATP synthase produces ATP from ADP in the presence of a proton or sodium gradient. F-type ATPases consist of two structural domains, F(1) containing the extramembraneous catalytic core and F(0) containing the membrane proton channel, linked together by a central stalk and a peripheral stalk. During catalysis, ATP synthesis in the catalytic domain of F(1) is coupled via a rotary mechanism of the central stalk subunits to proton translocation. In terms of biological role, this protein is part of the stalk that links CF(0) to CF(1). It either transmits conformational changes from CF(0) to CF(1) or is implicated in proton conduction. The polypeptide is ATP synthase subunit delta (Syntrophus aciditrophicus (strain SB)).